The sequence spans 396 residues: Cathepsin D (396 aa).

The N-terminal stretch at 1-18 (MKFLYLFLFAVFAWTSDA) is a signal peptide. A propeptide spans 19-61 (IVRIPLKKFRSIRRTLSDSGLNVEQLLAGTNSLQHNQGFPSSN) (activation peptide). The region spanning 76 to 393 (YYGEIGLGTP…DRESNRVGFA (318 aa)) is the Peptidase A1 domain. Aspartate 94 is a catalytic residue. A disulfide bridge connects residues cysteine 107 and cysteine 114. The N-linked (GlcNAc...) asparagine glycan is linked to asparagine 131. An intrachain disulfide couples cysteine 272 to cysteine 276. The active site involves aspartate 281. An intrachain disulfide couples cysteine 315 to cysteine 352.

It belongs to the peptidase A1 family. In terms of assembly, monomer.

The protein resides in the lysosome. It carries out the reaction Specificity similar to, but narrower than, that of pepsin A. Does not cleave the 4-Gln-|-His-5 bond in B chain of insulin.. Its activity is regulated as follows. Inhibited by pepstatin. In terms of biological role, acid protease active in intracellular protein breakdown. The protein is Cathepsin D (ctsd) of Clupea harengus (Atlantic herring).